Here is a 61-residue protein sequence, read N- to C-terminus: uncharacterized protein (61 aa).

The segment at 39 to 61 (PRPFTPGLADPRRLGPRRVQAAQ) is disordered.

This is an uncharacterized protein from Pan troglodytes (Chimpanzee).